A 178-amino-acid polypeptide reads, in one-letter code: Large ribosomal subunit protein uL6 (178 aa).

Belongs to the universal ribosomal protein uL6 family. In terms of assembly, part of the 50S ribosomal subunit.

Its function is as follows. This protein binds to the 23S rRNA, and is important in its secondary structure. It is located near the subunit interface in the base of the L7/L12 stalk, and near the tRNA binding site of the peptidyltransferase center. The chain is Large ribosomal subunit protein uL6 from Helicobacter pylori (strain P12).